Consider the following 505-residue polypeptide: Calcium/calmodulin-dependent protein kinase kinase 1 (505 aa).

Positions 28-66 are disordered; the sequence is LEEADEGPEPARNGVDPPPRARAASVIPGSASRPTPVRP. 2 positions are modified to phosphoserine: Ser-67 and Ser-74. Arg-78 carries the asymmetric dimethylarginine modification. The segment at 84-105 is disordered; it reads LGAQVGPYSTGPASHISPRSWR. Ser-100 is modified (phosphoserine). Residue Thr-108 is modified to Phosphothreonine. Residues 128–409 form the Protein kinase domain; that stretch reads YKLQSEIGKG…VSDIKLHPWV (282 aa). Residues 134-142 and Lys-157 each bind ATP; that span reads IGKGAYGVV. The tract at residues 167-189 is RP domain; the sequence is QYGFPRRPPPRGSQATQGGPAKQ. The Proton acceptor role is filled by Asp-275. The autoinhibitory domain stretch occupies residues 435-440; it reads KNSVRL. The interval 438-463 is calmodulin-binding; it reads VRLIPSWTTVILVKSMLRKRSFGNPF. 3 positions are modified to phosphoserine: Ser-458, Ser-475, and Ser-492. Positions 460–505 are disordered; sequence GNPFEPQARREERSMSAPGSLLMKEGCGEGCKSPELPGVQEDEAAS.

This sequence belongs to the protein kinase superfamily. Ser/Thr protein kinase family. As to quaternary structure, interacts with CAMK4 and calmodulin. In terms of processing, appears to be autophosphorylated in a Ca(2+)/calmodulin-dependent manner. Phosphorylated at multiple sites by PRCAKA/PKA. Phosphorylation of Ser-458 is blocked upon binding to Ca(2+)/calmodulin. In vitro, phosphorylated by CAMK1 and CAMK4. Widely expressed. Differentially expressed in various brain regions.

It localises to the cytoplasm. The protein resides in the nucleus. It catalyses the reaction L-seryl-[protein] + ATP = O-phospho-L-seryl-[protein] + ADP + H(+). The catalysed reaction is L-threonyl-[protein] + ATP = O-phospho-L-threonyl-[protein] + ADP + H(+). Activated by Ca(2+)/calmodulin. Binding of calmodulin may relieve intrasteric autoinhibition. Partially inhibited upon phosphorylation by PRCAKA/PKA. May be regulated through phosphorylation by CAMK1 and CAMK4. In terms of biological role, calcium/calmodulin-dependent protein kinase that belongs to a proposed calcium-triggered signaling cascade involved in a number of cellular processes. Phosphorylates CAMK1, CAMK1D, CAMK1G and CAMK4. Involved in regulating cell apoptosis. Promotes cell survival by phosphorylating AKT1/PKB that inhibits pro-apoptotic BAD/Bcl2-antagonist of cell death. This chain is Calcium/calmodulin-dependent protein kinase kinase 1 (Camkk1), found in Mus musculus (Mouse).